A 796-amino-acid polypeptide reads, in one-letter code: Protein translocase subunit SecA 2 (796 aa).

ATP contacts are provided by residues glutamine 84, 102–106, and aspartate 496; that span reads GEGKT.

The protein belongs to the SecA family. In terms of assembly, monomer and homodimer. Part of the essential Sec protein translocation apparatus which comprises SecA, SecYEG and auxiliary proteins SecDF. Other proteins may also be involved.

It localises to the cell membrane. It is found in the cytoplasm. The catalysed reaction is ATP + H2O + cellular proteinSide 1 = ADP + phosphate + cellular proteinSide 2.. Functionally, part of the Sec protein translocase complex. Interacts with the SecYEG preprotein conducting channel. Has a central role in coupling the hydrolysis of ATP to the transfer of proteins into and across the cell membrane, serving as an ATP-driven molecular motor driving the stepwise translocation of polypeptide chains across the membrane. This is Protein translocase subunit SecA 2 from Staphylococcus aureus (strain MRSA252).